Here is a 446-residue protein sequence, read N- to C-terminus: Packaging protein 1 (446 aa).

Residues 1-71 (MEEKAGLGRL…QPQASKPKKH (71 aa)) are disordered. A compositionally biased stretch (basic and acidic residues) spans 31-43 (FHSDRNHPNKEAE). ATP is bound at residue 170 to 177 (GPTGCGKS). The interval 439-446 (RYYHSKKK) is DNA-binding.

The protein belongs to the adenoviridae packaging protein 1 family. In terms of assembly, homodimer. Part of a genome packaging complex composed of packaging proteins 1, 2 and 3; this complex specifically binds to the packaging sequence on the left end of viral genomic DNA and performs packaging of the viral genome. Interacts with protein 33K.

The protein resides in the virion. The protein localises to the host nucleus. Its subcellular location is the host nucleoplasm. It is found in the host nucleolus. Its function is as follows. Component of the packaging machinery which encapsidates the viral DNA into preformed capsids and transcriptional activator of the viral major late promoter (MLP). Binds, along with packaging proteins 2 and 3, to the specific packaging sequence on the left end of viral genomic DNA and displays ATPase activity thereby providing the power stroke of the packaging machinery. The activity of packaging protein IVa2 is stimulated by protein 33K which acts as a terminase. May be the protein that pumps DNA into the capsid powered by ATP hydrolysis. Specifically binds to the 5'-CG-3' nucleotides of the repeats making up the packaging sequence. Component of the DEF-A and DEF-B transcription factors that bind downstream elements of the major late promoter (MLP), and stimulate transcription from the MLP after initiation of viral DNA replication. DEF-A is a heterodimer packaging proteins 1 and 2 and DEF-B is a homodimer of packaging protein 1. This is Packaging protein 1 from Canine adenovirus serotype 2 (strain Toronto A 26-61) (CAdV-2).